The chain runs to 108 residues: ATP-dependent Clp protease adapter protein ClpS (108 aa).

It belongs to the ClpS family. Binds to the N-terminal domain of the chaperone ClpA.

Functionally, involved in the modulation of the specificity of the ClpAP-mediated ATP-dependent protein degradation. The polypeptide is ATP-dependent Clp protease adapter protein ClpS (Mycobacterium leprae (strain TN)).